Reading from the N-terminus, the 1036-residue chain is Pre-mRNA-processing factor 39-2 (1036 aa).

Residues Met1 to Ser24 are disordered. HAT repeat units follow at residues Asp62–Lys94, Cys96–Ala128, Glu131–Gly166, Gln168–Ser201, Cys278–Thr310, and Gly312–Ser344. Disordered stretches follow at residues Gly595–Gln618, Pro714–Thr767, and Lys995–Ile1036. The span at Pro714–Gln726 shows a compositional bias: low complexity. The segment covering Arg740–Glu755 has biased composition (basic and acidic residues). Residues Ser1002–Ile1036 are compositionally biased toward polar residues.

The protein belongs to the PRP39 family.

It is found in the nucleus. Its function is as follows. Involved in pre-mRNA splicing. This Arabidopsis thaliana (Mouse-ear cress) protein is Pre-mRNA-processing factor 39-2.